We begin with the raw amino-acid sequence, 203 residues long: Proteasome subunit beta 2 (203 aa).

The propeptide at 1-9 (MGEEVQIGA) is removed in mature form; by autocatalysis. T10 functions as the Nucleophile in the catalytic mechanism.

This sequence belongs to the peptidase T1B family. As to quaternary structure, the 20S proteasome core is composed of 14 alpha and 14 beta subunits that assemble into four stacked heptameric rings, resulting in a barrel-shaped structure. The two inner rings, each composed of seven catalytic beta subunits, are sandwiched by two outer rings, each composed of seven alpha subunits. The catalytic chamber with the active sites is on the inside of the barrel. Has a gated structure, the ends of the cylinder being occluded by the N-termini of the alpha-subunits. Is capped at one or both ends by the proteasome regulatory ATPase, PAN.

The protein resides in the cytoplasm. The catalysed reaction is Cleavage of peptide bonds with very broad specificity.. With respect to regulation, the formation of the proteasomal ATPase PAN-20S proteasome complex, via the docking of the C-termini of PAN into the intersubunit pockets in the alpha-rings, triggers opening of the gate for substrate entry. Interconversion between the open-gate and close-gate conformations leads to a dynamic regulation of the 20S proteasome proteolysis activity. Component of the proteasome core, a large protease complex with broad specificity involved in protein degradation. This Pyrobaculum arsenaticum (strain DSM 13514 / JCM 11321 / PZ6) protein is Proteasome subunit beta 2.